The following is a 176-amino-acid chain: Pituitary adenylate cyclase-activating polypeptide (176 aa).

The signal sequence occupies residues 1-24; that stretch reads MTMCSGARLALLVYGIIMHSSVYS. A propeptide spanning residues 25-79 is cleaved from the precursor; it reads SPAAAGLRFPGIRPEEEAYGEDGNPLPDFDGSEPPGAGSPASAPRAAAAWYRPAG. The tract at residues 39-68 is disordered; the sequence is EEEAYGEDGNPLPDFDGSEPPGAGSPASAP. The span at 56 to 68 shows a compositional bias: low complexity; it reads SEPPGAGSPASAP. An important for receptor binding region spans residues 150–158; that stretch reads VKKYLAAVL. L158 bears the Leucine amide mark. K169 carries the post-translational modification Lysine amide. Positions 173 to 176 are excised as a propeptide; it reads IAYL.

Belongs to the glucagon family.

It is found in the secreted. Functionally, PACAP is a neuropeptide involved in diverse array of physiological processes through activating the PACAP subfamily of class B1 G protein-coupled receptors: VIP receptor 1 (VIPR1), VIP receptor 2 (VIPR2), and PACAP type I receptor (ADCYAP1R1). Exerts neuroprotective and general cytoprotective effects due to anti-apoptotic, anti-inflammatory, and antioxidant actions. Promotes neuron projection development through the RAPGEF2/Rap1/B-Raf/ERK pathway. In chromaffin cells, induces long-lasting increase of intracellular calcium concentrations and neuroendocrine secretion. Involved in the control of glucose homeostasis, induces insulin secretion by pancreatic beta cells. PACAP exists in two bioactive forms from proteolysis of the same precursor protein, PACAP27 and PACAP38, which differ by eleven amino acid residues in the C-terminus. This chain is Pituitary adenylate cyclase-activating polypeptide, found in Homo sapiens (Human).